Consider the following 197-residue polypeptide: Probable GTP-binding protein EngB (197 aa).

An EngB-type G domain is found at 22–197; sequence TGVEVAFAGR…FKEKLDTWYQ (176 aa). GTP is bound by residues 30 to 37, 57 to 61, 75 to 78, 142 to 145, and 177 to 179; these read GRSNAGKS, GRTQL, DLPG, TKAD, and FSS. Mg(2+)-binding residues include S37 and T59.

Belongs to the TRAFAC class TrmE-Era-EngA-EngB-Septin-like GTPase superfamily. EngB GTPase family. Requires Mg(2+) as cofactor.

Necessary for normal cell division and for the maintenance of normal septation. In Francisella tularensis subsp. tularensis (strain FSC 198), this protein is Probable GTP-binding protein EngB.